A 167-amino-acid chain; its full sequence is Sperm acrosome membrane-associated protein 3 (167 aa).

Over 1–63 (MVSALREAPL…EARSRALRRR (63 aa)) the chain is Cytoplasmic. A helical; Signal-anchor for type II membrane protein transmembrane segment spans residues 64-84 (WCPAGIILLALISLLSCLLPA). Topologically, residues 85–167 (SEAKVYGRCE…VPNVCQMYCS (83 aa)) are extracellular. One can recognise a C-type lysozyme domain in the interval 88–167 (KVYGRCELAR…VPNVCQMYCS (80 aa)). A disulfide bond links cysteine 151 and cysteine 166.

It belongs to the glycosyl hydrolase 22 family. In terms of assembly, interacts with ASTL. Post-translationally, the processed form derives from the membrane form by proteolytic processing.

It localises to the cytoplasmic vesicle. The protein resides in the secretory vesicle. The protein localises to the acrosome membrane. In terms of biological role, sperm surface membrane protein that may be involved in sperm-egg plasma membrane adhesion and fusion during fertilization. It could be a potential receptor for the egg oligosaccharide residue N-acetylglucosamine, which is present in the extracellular matrix over the egg plasma membrane. The processed form has no detectable bacteriolytic activity in vitro. In Pongo pygmaeus (Bornean orangutan), this protein is Sperm acrosome membrane-associated protein 3 (SPACA3).